Reading from the N-terminus, the 69-residue chain is Disintegrin EC6 subunit beta (69 aa).

One can recognise a Disintegrin domain in the interval 1 to 65 (NSVHPCCDPV…DCPPNPWNGK (65 aa)). Cystine bridges form between Cys6-Cys29, Cys20-Cys26, Cys25-Cys50, and Cys38-Cys57. A Cell attachment site motif is present at residues 42-44 (RGD).

It belongs to the venom metalloproteinase (M12B) family. P-II subfamily. P-IIe sub-subfamily. In terms of assembly, heterodimer with subunit alpha; disulfide-linked. In terms of tissue distribution, expressed by the venom gland.

It is found in the secreted. Functionally, potently inhibits adhesion of alpha-4/beta-1 (ITGA4/ITGB1) and alpha-9/beta-1 (ITGA9/ITGB1) integrins to VCAM1, and adhesion of alpha-5/beta-1 (ITGA5/ITGB1) integrin to fibronectin. Has a much less effect on alpha-IIb/beta-3 (ITGA2B/ITGB3) integrin. Also potently inhibits neutrophil migration across TNF-alpha-activated human umbilical endothelial cells. The polypeptide is Disintegrin EC6 subunit beta (Echis carinatus sochureki (Saw-scaled viper)).